A 415-amino-acid chain; its full sequence is Probable tRNA pseudouridine synthase D (415 aa).

The active-site Nucleophile is the D83. Positions 158 to 378 (GFPNYFGYQR…PGRRRELLIR (221 aa)) constitute a TRUD domain.

It belongs to the pseudouridine synthase TruD family.

The catalysed reaction is uridine(13) in tRNA = pseudouridine(13) in tRNA. Could be responsible for synthesis of pseudouridine from uracil-13 in transfer RNAs. This chain is Probable tRNA pseudouridine synthase D, found in Thermococcus gammatolerans (strain DSM 15229 / JCM 11827 / EJ3).